A 1583-amino-acid chain; its full sequence is MGVKIKLVLAVVLILSANVLGQDEIVNDTESTVSVTEAQVVELETDVKEKEDETFEETSPVELLPDTENLEVRSGKYQLNDGLVGEEPVNLEAVDFNSNNVESEKQLLSPPSTTVVTGTDYSYIDGRVLPATTYQNNGQPYVITTQRLQQIRSNFMYWFYDQGGSDNIGDYQRDIHTSTPQIHKNFNFQLPFFGFRFNYTRISMNGYIYFSDPPDHYTYPLSFPVRDWPNINDPSFIGIFFSKCRIGNMRPEEPDPRRPGIYFRLDRDLQTRTDQLGVEMRERVTWDIREGVIGSETFFPKHTITITWKNMSFAGGIDNSLFMTNTFQMVLATDEVFTYAIFNYLEINWSSHTEAGGDTTTGEGGIPAYIGFNAGNGTRSYEYKPYSQASVLRDLTGRGWANGFPGRHIFRIDENILMGTCNKDIDGANLPLMFAPESGNMLGGTIVNITGPCFNPNDRITCRFDTESVLGAVVDVNRAICVQPRFWHNGYARFEVAINNEPYKWKGRYFVETPATATEKIFFPDNSVHERYPPEVRITWDRFNLTTNLNVQLQISLWGYKEVTIRPQLEYIDMIEVGVANTGEYVINPQNFRNRENIMHNDMQFGFLQINLTTPEVFKGVPISPILWSRPIPLGWYFAPQWERLHGQRWSNSMCNNWLRTDRFLKNFAAQVWVCPCTLEHALLDKGRFMPDLDCDRDTNPTCRYHWGGIHCVRSGAPSSEGSGQQCCYDKNGFLMLSYDQMWGSKPSRSHDFGFTPYNEANKVPSLSRWFHDMIPFYQCCLWQEEQAVGCETFRFERRPSQDCVAYQSPGVAGIFGDPHIVTFDDLQYTFNGKGEYVLVRVDHSQLKLDVQGRFEQVPRNIHGAVNATHLTSVVAASNNSQTIEVRLRPQHAQWRYRLDVFANGKRVYFDRTALRVQYFPGVTVYQPMYVLNQSEIVVMFSSGAGLEVVENRGFMTARVYLPWTFMNQTRGLFGNWSLDVNDDFTRPDGTLASVDLNNFQSAHRDFAQHWQLTDREQRDIGVAMFVREYGRTAAYYNDNEFIPNFIREPANFLPVNRSHDVTRAIEICQDSYQCRYDYGMTLNRDMAEFTKNYLSSITNIKEQNARRVISCGILETPRFGRKSNFFFTPGTRVNFECNQDFILTGDKRRVCEDNGRWNLPDYGYTECLRQQEFSQRALFLTWGVIVAVILPLGLLICLLWFWCWHKPRSEGKEGFRFEDLPRSKSASRLNLRSSSMGNITDTMKSSTIPGSEKKSPETPTEETPARIVGRSVLAPPADGDSSGIGYPDSGKSDSGKSDKSSGLPKKRRAYDKTYRTNEPLPNAPDVEFPEKLWDLSEEDLLSLTSPSDSESNRDSTLTRPAKDIQYLNKPRQTGRQAIPSDSGYSTKEGSEDPYAPKFDDQYSPIPSQYSPTYSEIYSPPISPASDSSPRNTYNNPGIPEAPKSAPVDGIKTFTMPTNKGKQEYSSRTLGATWGIISAVMLPIIIILICVAWRILQRRKAEEREENEFLDVKTRAIDPDDSVKVTSDDESIPYKKDVTEETPEPTEGVQAVEPSNPNYNYGRPYVDLQPGQPRQWGGETEIN.

The signal sequence occupies residues 1–21 (MGVKIKLVLAVVLILSANVLG). The Extracellular segment spans residues 22–1182 (QDEIVNDTES…EFSQRALFLT (1161 aa)). The region spanning 260-415 (GIYFRLDRDL…GRHIFRIDEN (156 aa)) is the NIDO domain. Residues 647–798 (GQRWSNSMCN…VGCETFRFER (152 aa)) form the AMOP domain. A VWFD domain is found at 811 to 1019 (GVAGIFGDPH…HWQLTDREQR (209 aa)). The region spanning 1110–1170 (ISCGILETPR…PDYGYTECLR (61 aa)) is the Sushi domain. 2 disulfide bridges follow: cysteine 1112-cysteine 1152 and cysteine 1138-cysteine 1168. The helical transmembrane segment at 1183–1203 (WGVIVAVILPLGLLICLLWFW) threads the bilayer. Residues 1204-1472 (CWHKPRSEGK…QEYSSRTLGA (269 aa)) lie on the Cytoplasmic side of the membrane. Over residues 1232–1250 (LRSSSMGNITDTMKSSTIP) the composition is skewed to polar residues. The tract at residues 1232–1448 (LRSSSMGNIT…IPEAPKSAPV (217 aa)) is disordered. A compositionally biased stretch (basic and acidic residues) spans 1291–1300 (GKSDSGKSDK). Polar residues predominate over residues 1405 to 1416 (PIPSQYSPTYSE). Residues 1473 to 1493 (TWGIISAVMLPIIIILICVAW) form a helical membrane-spanning segment. At 1494–1583 (RILQRRKAEE…RQWGGETEIN (90 aa)) the chain is on the extracellular side. Basic and acidic residues predominate over residues 1521 to 1539 (DSVKVTSDDESIPYKKDVT). The segment at 1521-1583 (DSVKVTSDDE…RQWGGETEIN (63 aa)) is disordered.

In terms of tissue distribution, in fifth instar larvae, expressed in midgut epithelial cells (at protein level).

It is found in the membrane. The protein localises to the cell junction. The protein resides in the septate junction. It localises to the lateral cell membrane. Functionally, may be required for the proper organization of smooth septate junctions and for the barrier function of the midgut epithelium. This chain is Protein mesh, found in Bombyx mori (Silk moth).